The primary structure comprises 373 residues: Histidinol-phosphate aminotransferase (373 aa).

Position 230 is an N6-(pyridoxal phosphate)lysine (Lys-230).

The protein belongs to the class-II pyridoxal-phosphate-dependent aminotransferase family. Histidinol-phosphate aminotransferase subfamily. Homodimer. Pyridoxal 5'-phosphate is required as a cofactor.

The enzyme catalyses L-histidinol phosphate + 2-oxoglutarate = 3-(imidazol-4-yl)-2-oxopropyl phosphate + L-glutamate. The protein operates within amino-acid biosynthesis; L-histidine biosynthesis; L-histidine from 5-phospho-alpha-D-ribose 1-diphosphate: step 7/9. In Synechococcus sp. (strain ATCC 27144 / PCC 6301 / SAUG 1402/1) (Anacystis nidulans), this protein is Histidinol-phosphate aminotransferase.